A 99-amino-acid polypeptide reads, in one-letter code: DNA-binding protein Fis (99 aa).

Residues 75 to 94 constitute a DNA-binding region (H-T-H motif); the sequence is QTRAATMLGINRGTLRKKLK.

The protein belongs to the transcriptional regulatory Fis family. Homodimer.

In terms of biological role, activates ribosomal RNA transcription. Plays a direct role in upstream activation of rRNA promoters. This chain is DNA-binding protein Fis, found in Pasteurella multocida (strain Pm70).